An 841-amino-acid chain; its full sequence is Serine/threonine-protein kinase/endoribonuclease IRE1a (841 aa).

Positions 1–30 are cleaved as a signal peptide; sequence MPPRCPFLRHLFFLLLLLSPWIMSPCGGAA. Over 31–323 the chain is Lumenal; that stretch reads DDVTYPIVPS…KQKYTYLFGQ (293 aa). Residues Asn-100, Asn-104, Asn-119, Asn-132, and Asn-221 are each glycosylated (N-linked (GlcNAc...) asparagine). Residues 324–344 form a helical membrane-spanning segment; that stretch reads WSPVKLLAPLVLLGVVVSVFI. Over 345 to 841 the chain is Cytoplasmic; it reads KKFSSRGSDV…FRKYFKCDII (497 aa). Positions 352-382 are disordered; sequence SDVSLKAGPSKKKKNRKSAKDTNRQSVPRGQ. The 291-residue stretch at 414-704 folds into the Protein kinase domain; the sequence is FLSSKEIAKG…ATEVLLHPMF (291 aa). Residues 420-428 and Lys-442 each bind ATP; that span reads IAKGSNGTV. The active-site Proton acceptor is Asp-570. One can recognise a KEN domain in the interval 707 to 838; sequence SEMRLSFLRD…EEVFRKYFKC (132 aa).

This sequence belongs to the protein kinase superfamily. Ser/Thr protein kinase family. In terms of assembly, homodimer; disulfide-linked. Dimer formation is driven by hydrophobic interactions within the N-terminal luminal domains and stabilized by disulfide bridges. It depends on Mg(2+) as a cofactor. Autophosphorylated. Ubiquitous. Detected in the vascular bundles of young plants, leaves, roots, seedlings and in the receptacles of flowers and vascular bundles of the petals.

Its subcellular location is the endoplasmic reticulum membrane. The catalysed reaction is L-seryl-[protein] + ATP = O-phospho-L-seryl-[protein] + ADP + H(+). It catalyses the reaction L-threonyl-[protein] + ATP = O-phospho-L-threonyl-[protein] + ADP + H(+). Its activity is regulated as follows. The kinase domain is activated by trans-autophosphorylation. Kinase activity is required for activation of the endoribonuclease domain. Functionally, senses unfolded proteins in the lumen of the endoplasmic reticulum via its N-terminal domain which leads to enzyme auto-activation. The active endoribonuclease domain splices bZIP60 mRNA to generate a new C-terminus, converting it into a potent unfolded-protein response transcriptional activator which then induces transcription of UPR target genes. Involved in organ growth regulation. Plays a role in plant immunity and abiotic stress responses. This is Serine/threonine-protein kinase/endoribonuclease IRE1a (IRE1A) from Arabidopsis thaliana (Mouse-ear cress).